Reading from the N-terminus, the 398-residue chain is Sex hormone-binding globulin (398 aa).

The first 31 residues, 1 to 31, serve as a signal peptide directing secretion; that stretch reads MATPPLVPLLLLLLLLLPHAHHRLALRSVLA. 2 consecutive Laminin G-like domains span residues 41 to 213 and 220 to 386; these read VHLI…RRSC and GIFF…THSC. 2 disulfide bridges follow: Cys189–Cys213 and Cys358–Cys386. Residues Asn376 and Asn392 are each glycosylated (N-linked (GlcNAc...) asparagine).

Homodimer.

It localises to the secreted. Its function is as follows. Functions as an androgen transport protein, but may also be involved in receptor mediated processes. Each dimer binds one molecule of steroid. Specific for 5-alpha-dihydrotestosterone, testosterone, and 17-beta-estradiol. Regulates the plasma metabolic clearance rate of steroid hormones by controlling their plasma concentration. This is Sex hormone-binding globulin (SHBG) from Oryctolagus cuniculus (Rabbit).